Consider the following 347-residue polypeptide: Phosphoribosylformylglycinamidine cyclo-ligase (347 aa).

Belongs to the AIR synthase family.

The protein resides in the cytoplasm. The catalysed reaction is 2-formamido-N(1)-(5-O-phospho-beta-D-ribosyl)acetamidine + ATP = 5-amino-1-(5-phospho-beta-D-ribosyl)imidazole + ADP + phosphate + H(+). It participates in purine metabolism; IMP biosynthesis via de novo pathway; 5-amino-1-(5-phospho-D-ribosyl)imidazole from N(2)-formyl-N(1)-(5-phospho-D-ribosyl)glycinamide: step 2/2. The polypeptide is Phosphoribosylformylglycinamidine cyclo-ligase (Yersinia pseudotuberculosis serotype O:1b (strain IP 31758)).